The chain runs to 79 residues: Short neurotoxin 8 (79 aa).

The N-terminal stretch at Met1–Thr21 is a signal peptide. 4 disulfide bridges follow: Cys24–Cys41, Cys34–Cys59, Cys63–Cys71, and Cys72–Cys77.

Belongs to the three-finger toxin family. Short-chain subfamily. Type III alpha-neurotoxin sub-subfamily. As to expression, expressed by the venom gland.

It localises to the secreted. Its function is as follows. Binds with high affinity to muscle nicotinic acetylcholine receptor (nAChR) and hinders acetylcholine binding to the receptor, thereby impairing neuromuscular transmission. Causes muscle paralysis, spasms and increased respiration. This chain is Short neurotoxin 8, found in Pseudonaja textilis (Eastern brown snake).